A 632-amino-acid polypeptide reads, in one-letter code: Probable potassium transport system protein Kup (632 aa).

Helical transmembrane passes span 19–39 (LVVG…LYSL), 59–79 (IISM…VMFV), 110–130 (LIMM…VITP), 146–166 (PGLS…LFFI), 178–198 (FGPI…IHLV), 221–241 (LQAF…EALY), 256–276 (WFVL…AMLL), 298–318 (MVLL…SGAF), 346–366 (IYMP…VLAF), 375–395 (AYGI…ALVM), 403–423 (PALV…FFAA), and 428–448 (IAEG…LLMT).

Belongs to the HAK/KUP transporter (TC 2.A.72) family.

The protein localises to the cell inner membrane. The enzyme catalyses K(+)(in) + H(+)(in) = K(+)(out) + H(+)(out). Transport of potassium into the cell. Likely operates as a K(+):H(+) symporter. The chain is Probable potassium transport system protein Kup from Cupriavidus metallidurans (strain ATCC 43123 / DSM 2839 / NBRC 102507 / CH34) (Ralstonia metallidurans).